The chain runs to 628 residues: Rac GTPase-activating protein 1 (628 aa).

At methionine 1 the chain carries N-acetylmethionine. A coiled-coil region spans residues 33-110 (QVVKDFEDFR…IQLIRDILMC (78 aa)). The interaction with SLC26A8 stretch occupies residues 107–286 (ILMCDTSGSI…GTPQNTGGMR (180 aa)). A Phosphoserine; by PLK1 modification is found at serine 150. Serine 155 carries the post-translational modification Phosphoserine. The residue at position 158 (serine 158) is a Phosphoserine; by PLK1. A Phosphothreonine modification is found at threonine 162. Residues serine 165 and serine 171 each carry the phosphoserine; by PLK1 modification. A disordered region spans residues 179–201 (KKREKRRSNSRQFIDGPPGPVKK). Residues serine 204, serine 207, and serine 215 each carry the phosphoserine modification. The segment at 242 to 284 (SWTRSRGKSGPLQPVNSDSALNSRPLEPRTDTDNLGTPQNTGG) is disordered. A Glycyl lysine isopeptide (Lys-Gly) (interchain with G-Cter in SUMO2) cross-link involves residue lysine 249. Position 258 is a phosphoserine (serine 258). The span at 274–283 (DNLGTPQNTG) shows a compositional bias: polar residues. The Phorbol-ester/DAG-type zinc finger occupies 287 to 336 (LHDFVSKTVIKPESCVPCGKRIKFGKLSLKCRDCRLVSHPECRDRCPLPC). Threonine 343 carries the post-translational modification Phosphothreonine. Positions 350-540 (GMLADFVSQA…RLLSLPLEYW (191 aa)) constitute a Rho-GAP domain. A Phosphoserine; by AURKB modification is found at serine 388. A Glycyl lysine isopeptide (Lys-Gly) (interchain with G-Cter in SUMO2) cross-link involves residue lysine 405. Serine 411 is modified (phosphoserine; by AURKB). 4 positions are modified to phosphothreonine: threonine 564, threonine 577, threonine 585, and threonine 602.

In terms of assembly, heterotetramer of two molecules each of RACGAP1 and KIF23. Found in the centralspindlin complex. Associates with alpha-, beta- and gamma-tubulin and microtubules. Interacts via its Rho-GAP domain with RND2. Associates with AURKB during M phase. Interacts via its Rho-GAP domain and basic region with PRC1. The interaction with PRC1 inhibits its GAP activity towards CDC42 in vitro, which may be required for maintaining normal spindle morphology. Interacts with SLC26A8 via its N-terminus. Interacts with ECT2; the interaction is direct, occurs at anaphase and during cytokinesis in a microtubule-dependent manner, is enhanced by phosphorylation by PLK1 and phosphorylation at Ser-165 plays a major role in mediating binding. Interacts with RAB11FIP3; the interaction occurs at late telophase. Interacts with KIF23; the interaction is direct. Phosphorylated at multiple sites in the midbody during cytokinesis. Phosphorylation by AURKB on Ser-388 at the midbody is, at least in part, responsible for exerting its latent GAP activity towards RhoA. Phosphorylation on multiple serine residues by PLK1 enhances its association with ECT2 and is critical for cleavage furrow formation. Phosphorylation on Ser-165 plays a major role in mediating interaction with ECT2. Phosphorylation on Ser-158 does not appear to contribute to binding to ECT2. As to expression, highly expressed in testis, thymus and spleen and weakly expressed in brain, heart, skeletal muscle and kidney. In testis, expression is restricted to germ cells with the highest levels of expression found in spermatocytes. Not detected in adult liver. Also expressed in fetal liver and in several hematopoietic cell lines.

Its subcellular location is the nucleus. It is found in the cytoplasm. The protein resides in the cytoskeleton. It localises to the spindle. The protein localises to the cytoplasmic vesicle. Its subcellular location is the secretory vesicle. It is found in the acrosome. The protein resides in the cleavage furrow. It localises to the midbody. The protein localises to the midbody ring. Its subcellular location is the cell membrane. Its function is as follows. Component of the centralspindlin complex that serves as a microtubule-dependent and Rho-mediated signaling required for the myosin contractile ring formation during the cell cycle cytokinesis. Required for proper attachment of the midbody to the cell membrane during cytokinesis. Sequentially binds to ECT2 and RAB11FIP3 which regulates cleavage furrow ingression and abscission during cytokinesis. Plays key roles in controlling cell growth and differentiation of hematopoietic cells through mechanisms other than regulating Rac GTPase activity. Has a critical role in erythropoiesis. Also involved in the regulation of growth-related processes in adipocytes and myoblasts. May be involved in regulating spermatogenesis and in the RACGAP1 pathway in neuronal proliferation. Shows strong GAP (GTPase activation) activity towards CDC42 and RAC1 and less towards RHOA. Essential for the early stages of embryogenesis. May play a role in regulating cortical activity through RHOA during cytokinesis. May participate in the regulation of sulfate transport in male germ cells. The sequence is that of Rac GTPase-activating protein 1 from Mus musculus (Mouse).